Reading from the N-terminus, the 337-residue chain is Hairy/enhancer-of-split related with YRPW motif protein 2 (337 aa).

Residues 1 to 52 (MKRPCEETTSESDMDETIDVGSENNYSGQSTSSVIRLNSPTTTSQIMARKKR) form a disordered region. Acidic residues predominate over residues 8–18 (TTSESDMDETI). Over residues 22–46 (SENNYSGQSTSSVIRLNSPTTTSQI) the composition is skewed to polar residues. Positions 47–116 (MARKKRRGII…GGKGYFDAHA (70 aa)) are transcriptional repression and interaction with NCOR1 and SIN3A. Residues 48 to 103 (ARKKRRGIIEKRRRDRINNSLSELRRLVPTAFEKQGSAKLEKAEILQMTVDHLKML) form the bHLH domain. In terms of domain architecture, Orange spans 122–157 (MSIGFRECLTEVARYLSSVEGLDSSDPLRVRLVSHL). Residues 307-325 (LSVSATSSPQQTSSGTNNK) are compositionally biased toward polar residues. Residues 307–337 (LSVSATSSPQQTSSGTNNKPYRPWGTEVGAF) form a disordered region. The YRPW motif motif lies at 327–330 (YRPW).

This sequence belongs to the HEY family. As to quaternary structure, may self-associate. Interacts with GATA4, HES1 and HEYL. Interacts with HDAC1, NCOR1 and SIN3A. Interacts with ARNT and GATA6.

The protein resides in the nucleus. Downstream effector of Notch signaling which may be required for cardiovascular development. Transcriptional repressor which binds preferentially to the canonical E box sequence 5'-CACGTG-3'. Represses transcription by the cardiac transcriptional activators GATA4 and GATA6. This chain is Hairy/enhancer-of-split related with YRPW motif protein 2 (HEY2), found in Homo sapiens (Human).